The chain runs to 121 residues: Holo-[acyl-carrier-protein] synthase (121 aa).

Mg(2+) contacts are provided by aspartate 8 and glutamate 58.

The protein belongs to the P-Pant transferase superfamily. AcpS family. Mg(2+) is required as a cofactor.

It is found in the cytoplasm. The catalysed reaction is apo-[ACP] + CoA = holo-[ACP] + adenosine 3',5'-bisphosphate + H(+). Functionally, transfers the 4'-phosphopantetheine moiety from coenzyme A to a Ser of acyl-carrier-protein. The chain is Holo-[acyl-carrier-protein] synthase from Bacillus velezensis (strain DSM 23117 / BGSC 10A6 / LMG 26770 / FZB42) (Bacillus amyloliquefaciens subsp. plantarum).